Consider the following 110-residue polypeptide: UPF0145 protein (110 aa).

Belongs to the UPF0145 family.

This is UPF0145 protein from Listeria welshimeri.